Reading from the N-terminus, the 235-residue chain is Putative N-acetylmannosamine-6-phosphate 2-epimerase (235 aa).

The protein belongs to the NanE family.

It catalyses the reaction an N-acyl-D-glucosamine 6-phosphate = an N-acyl-D-mannosamine 6-phosphate. It participates in amino-sugar metabolism; N-acetylneuraminate degradation; D-fructose 6-phosphate from N-acetylneuraminate: step 3/5. Converts N-acetylmannosamine-6-phosphate (ManNAc-6-P) to N-acetylglucosamine-6-phosphate (GlcNAc-6-P). This Aliivibrio fischeri (strain ATCC 700601 / ES114) (Vibrio fischeri) protein is Putative N-acetylmannosamine-6-phosphate 2-epimerase.